A 133-amino-acid chain; its full sequence is ATP synthase epsilon chain (133 aa).

Belongs to the ATPase epsilon chain family. F-type ATPases have 2 components, CF(1) - the catalytic core - and CF(0) - the membrane proton channel. CF(1) has five subunits: alpha(3), beta(3), gamma(1), delta(1), epsilon(1). CF(0) has three main subunits: a, b and c.

The protein localises to the cell membrane. In terms of biological role, produces ATP from ADP in the presence of a proton gradient across the membrane. The sequence is that of ATP synthase epsilon chain from Geobacillus thermodenitrificans (strain NG80-2).